A 476-amino-acid chain; its full sequence is Nitrosuccinate lyase (476 aa).

Fumarate-binding residues include arginine 137, arginine 140, and arginine 201. Catalysis depends on serine 302, which acts as the Proton acceptor. Residues lysine 308 and asparagine 310 each contribute to the fumarate site. Arginine 341 acts as the Proton donor in catalysis.

It belongs to the class-II fumarase/aspartase family. As to quaternary structure, homotetramer.

It carries out the reaction 2-nitrobutanedioate = fumarate + nitrite + H(+). It participates in antibiotic biosynthesis. Functionally, part of a gene cluster involved in the biosynthesis of cremeomycin, a light-sensitive o-diazoquinone with antibacterial and antiproliferative effects. Catalyzes the formation of nitrous acid from nitrosuccinic acid (2-nitrobutanedioate) by elimination of its nitro group. This chain is Nitrosuccinate lyase, found in Streptomyces cremeus.